A 220-amino-acid chain; its full sequence is Deoxyribose-phosphate aldolase 2 (220 aa).

Aspartate 89 (proton donor/acceptor) is an active-site residue. Lysine 151 acts as the Schiff-base intermediate with acetaldehyde in catalysis. The Proton donor/acceptor role is filled by lysine 180.

It belongs to the DeoC/FbaB aldolase family. DeoC type 1 subfamily.

The protein resides in the cytoplasm. The enzyme catalyses 2-deoxy-D-ribose 5-phosphate = D-glyceraldehyde 3-phosphate + acetaldehyde. Its pathway is carbohydrate degradation; 2-deoxy-D-ribose 1-phosphate degradation; D-glyceraldehyde 3-phosphate and acetaldehyde from 2-deoxy-alpha-D-ribose 1-phosphate: step 2/2. In terms of biological role, catalyzes a reversible aldol reaction between acetaldehyde and D-glyceraldehyde 3-phosphate to generate 2-deoxy-D-ribose 5-phosphate. The polypeptide is Deoxyribose-phosphate aldolase 2 (Staphylococcus aureus (strain COL)).